We begin with the raw amino-acid sequence, 187 residues long: Accessory gene regulator protein B (187 aa).

A run of 5 helical transmembrane segments spans residues 49-69, 82-102, 107-127, 143-163, and 164-184; these read IAYI…FYLI, FWCY…VLHF, TLMM…APAA, YFSI…KEPY, and TQFI…IYYS.

It belongs to the AgrB family.

It is found in the cell membrane. Functionally, essential for the production of a quorum sensing system signal molecule, the autoinducing peptide (AIP). This quorum sensing system is responsible for the regulation of the expression of virulence factor genes. Involved in the proteolytic processing of AgrD, the precursor of AIP. This chain is Accessory gene regulator protein B, found in Staphylococcus aureus (strain MW2).